The sequence spans 704 residues: Elongation factor G (704 aa).

Residues 8–290 (EKYRNIGICA…GVVRYLPAPN (283 aa)) form the tr-type G domain. Residues 17 to 24 (AHVDAGKT), 88 to 92 (DTPGH), and 142 to 145 (NKMD) each bind GTP.

The protein belongs to the TRAFAC class translation factor GTPase superfamily. Classic translation factor GTPase family. EF-G/EF-2 subfamily.

It localises to the cytoplasm. Catalyzes the GTP-dependent ribosomal translocation step during translation elongation. During this step, the ribosome changes from the pre-translocational (PRE) to the post-translocational (POST) state as the newly formed A-site-bound peptidyl-tRNA and P-site-bound deacylated tRNA move to the P and E sites, respectively. Catalyzes the coordinated movement of the two tRNA molecules, the mRNA and conformational changes in the ribosome. The polypeptide is Elongation factor G (Francisella tularensis subsp. tularensis (strain FSC 198)).